Reading from the N-terminus, the 149-residue chain is MRAVVQRVSRAEVRVDGAVTGAVGRGLLVLLGVARDDGAQDARLLADKLAALRIFEDAAGKMNLAVAEVGGAVLVVSQFTLLGDARKGNRPGFSDAAPPEAANALYEAVCGMLREKGLRVETGVFRADMQVELVNDGPVTILLDSRRLF.

The Gly-cisPro motif, important for rejection of L-amino acids motif lies at 137-138 (GP).

This sequence belongs to the DTD family. In terms of assembly, homodimer.

The protein resides in the cytoplasm. The enzyme catalyses glycyl-tRNA(Ala) + H2O = tRNA(Ala) + glycine + H(+). It carries out the reaction a D-aminoacyl-tRNA + H2O = a tRNA + a D-alpha-amino acid + H(+). In terms of biological role, an aminoacyl-tRNA editing enzyme that deacylates mischarged D-aminoacyl-tRNAs. Also deacylates mischarged glycyl-tRNA(Ala), protecting cells against glycine mischarging by AlaRS. Acts via tRNA-based rather than protein-based catalysis; rejects L-amino acids rather than detecting D-amino acids in the active site. By recycling D-aminoacyl-tRNA to D-amino acids and free tRNA molecules, this enzyme counteracts the toxicity associated with the formation of D-aminoacyl-tRNA entities in vivo and helps enforce protein L-homochirality. The protein is D-aminoacyl-tRNA deacylase of Anaeromyxobacter dehalogenans (strain 2CP-C).